Reading from the N-terminus, the 146-residue chain is Holo-[acyl-carrier-protein] synthase (146 aa).

Positions 8 and 61 each coordinate Mg(2+).

It belongs to the P-Pant transferase superfamily. AcpS family. Requires Mg(2+) as cofactor.

It is found in the cytoplasm. The enzyme catalyses apo-[ACP] + CoA = holo-[ACP] + adenosine 3',5'-bisphosphate + H(+). In terms of biological role, transfers the 4'-phosphopantetheine moiety from coenzyme A to a Ser of acyl-carrier-protein. This is Holo-[acyl-carrier-protein] synthase from Rhodopseudomonas palustris (strain TIE-1).